The following is a 372-amino-acid chain: Tomoregulin-1 (372 aa).

The signal sequence occupies residues 1 to 36 (MGAQAPLRLPAAPPLAVCGYTSVLLLFAFCLPGSRA). Over 37–322 (SNQPAGGGGD…VPSRQKLTHV (286 aa)) the chain is Extracellular. A glycan (N-linked (GlcNAc...) asparagine) is linked at Asn-55. The Kazal-like 1 domain occupies 90–137 (ACQFQCHTNYIPVCGSNGDTYQNECFLRRAACKHQKDITVVARGPCYS). Cystine bridges form between Cys-91–Cys-121, Cys-95–Cys-114, and Cys-103–Cys-135. Asn-139 is a glycosylation site (N-linked (GlcNAc...) asparagine). Residues 139 to 161 (NGSGSGEGEEEGSGAGAHRKHSK) form a disordered region. Residues 181 to 229 (VCNIDCSGYSFNPVCASDGSSYNNPCFVREASCIKQEQIDIRHLGHCTD) form the Kazal-like 2 domain. 6 cysteine pairs are disulfide-bonded: Cys-182-Cys-213, Cys-186-Cys-206, Cys-195-Cys-227, Cys-267-Cys-280, Cys-275-Cys-291, and Cys-293-Cys-302. Positions 263 to 303 (SHMPCPENLNGYCIHGKCEFIYSTQKASCRCESGYTGQHCE) constitute an EGF-like domain. Residues 323 to 343 (LIAAIIGAVQIAIIVAIVMCI) form a helical membrane-spanning segment. Over 344-372 (TRKCPKNNRGRRQKQNLGHFTSDTSSRMV) the chain is Cytoplasmic. Residues 351-372 (NRGRRQKQNLGHFTSDTSSRMV) are disordered. Over residues 358–372 (QNLGHFTSDTSSRMV) the composition is skewed to polar residues.

This sequence belongs to the tomoregulin family. May interact with ST14. In terms of tissue distribution, maily expressed in neurons. Expressed in brain, neurointermediate lobe, pars distalis, pancreas, ovary and testis.

It is found in the cell membrane. In terms of biological role, neuron-specific restriction factor that prevents herpes simplex virus 1 (HHV-1) infection in the brain by blocking viral entry. Also able to restrict herpes simplex virus 2 (HHV-2) infection, although to a lesser extent. Acts by preventing the association between the viral glycoprotein D (gD) and its cell surface receptor NECTIN1, thereby inhibiting fusion of the virus and the cell membrane. Also able to prevent the association between the viral glycoprotein B (gB) and MYH9/NMMHC-IIA and MYH10/NMMHC-IIB receptors. The polypeptide is Tomoregulin-1 (Mus musculus (Mouse)).